The primary structure comprises 227 residues: 2-C-methyl-D-erythritol 4-phosphate cytidylyltransferase (227 aa).

This sequence belongs to the IspD/TarI cytidylyltransferase family. IspD subfamily.

The enzyme catalyses 2-C-methyl-D-erythritol 4-phosphate + CTP + H(+) = 4-CDP-2-C-methyl-D-erythritol + diphosphate. It participates in isoprenoid biosynthesis; isopentenyl diphosphate biosynthesis via DXP pathway; isopentenyl diphosphate from 1-deoxy-D-xylulose 5-phosphate: step 2/6. Catalyzes the formation of 4-diphosphocytidyl-2-C-methyl-D-erythritol from CTP and 2-C-methyl-D-erythritol 4-phosphate (MEP). In Caldanaerobacter subterraneus subsp. tengcongensis (strain DSM 15242 / JCM 11007 / NBRC 100824 / MB4) (Thermoanaerobacter tengcongensis), this protein is 2-C-methyl-D-erythritol 4-phosphate cytidylyltransferase.